Reading from the N-terminus, the 608-residue chain is Growth hormone receptor (608 aa).

Residues 1–16 form the signal peptide; that stretch reads MDLRHLLFTLALVCAN. The Extracellular segment spans residues 17-237; the sequence is DSLSASDDLL…EFVHCAEEIE (221 aa). Cystine bridges form between Cys-34–Cys-44 and Cys-72–Cys-83. N-linked (GlcNAc...) asparagine glycosylation is present at Asn-86. The cysteines at positions 97 and 111 are disulfide-linked. The region spanning 122 to 226 is the Fibronectin type-III domain; it reads PPVHLNWTLL…ILYVSFTQAG (105 aa). N-linked (GlcNAc...) asparagine glycans are attached at residues Asn-127, Asn-132, and Asn-171. Positions 211–215 match the WSXWS motif motif; sequence FGEFS. A helical membrane pass occupies residues 238 to 261; it reads FPWFLVVVFGVCGLAVTAILILLS. Over 262 to 608 the chain is Cytoplasmic; the sequence is KQPRLKMLIF…STDQLNKIMP (347 aa). Residues 267-352 are required for JAK2 binding; sequence KMLIFPPVPV…HLKSHSCLGA (86 aa). The short motif at 270–278 is the Box 1 motif element; the sequence is IFPPVPVPK. The UbE motif motif lies at 313–322; sequence DLWVEFIELD. 2 stretches are compositionally biased toward polar residues: residues 413 to 426 and 438 to 451; these read ANTDTQQPHTSTQS and STDSANPSVQTQLS. A disordered region spans residues 413–451; it reads ANTDTQQPHTSTQSESRESWPPFADSTDSANPSVQTQLS.

It belongs to the type I cytokine receptor family. Type 1 subfamily. On GH binding, proteolytically cleaved, in vitro, to produce GHBP. In terms of tissue distribution, broad specificity.

It localises to the cell membrane. The protein resides in the secreted. Its function is as follows. Receptor for pituitary gland growth hormone (GH1) involved in regulating postnatal body growth. On ligand binding, couples to the JAK2/STAT5 pathway. In terms of biological role, the soluble form (GHBP) acts as a reservoir of growth hormone in plasma and may be a modulator/inhibitor of GH signaling. This chain is Growth hormone receptor (GHR), found in Gallus gallus (Chicken).